A 904-amino-acid chain; its full sequence is Protein argonaute 4A (904 aa).

Disordered regions lie at residues 1–33 and 143–166; these read MESNSGEIEELPPPPPLPPNAEPIKTDDTKKLS and KSSANGGSPGNDSPGNDRKRVRRP. The segment covering 11-21 has biased composition (pro residues); that stretch reads LPPPPPLPPNA. Residues 144-156 show a composition bias toward low complexity; it reads SSANGGSPGNDSP. The PAZ domain occupies 274–388; that stretch reads PVVDFLLANQ…FPIELCSLVP (115 aa). Residues 557–865 form the Piwi domain; the sequence is FLLCVLAERK…AAAQVSQFIK (309 aa). A disordered region spans residues 871-890; that stretch reads ETSSSHGGHTSAGSAPVPEL. Residues 872–885 are compositionally biased toward low complexity; it reads TSSSHGGHTSAGSA.

It belongs to the argonaute family. Ago subfamily.

Its function is as follows. Probably involved in the RNA silencing pathway. May bind to short RNAs such as microRNAs (miRNAs) or short interfering RNAs (siRNAs), and represses the translation of mRNAs which are complementary to them. The chain is Protein argonaute 4A (AGO4A) from Oryza sativa subsp. japonica (Rice).